The following is a 1778-amino-acid chain: Protein TIC 214 (1778 aa).

6 helical membrane-spanning segments follow: residues 18 to 38, 67 to 87, 90 to 110, 132 to 152, 175 to 195, and 226 to 246; these read IINSVVVVGLYYGFLTTFSIG, FIAGQLMMFISIYYAPLHLAL, PHTITVLALPYLLFHFFWNNN, VFLNNLIFQLFNHFILPSSML, VGWLIGHILFMKWVGLVLVWI, and IFSILLFITCVYYLGRIPSPI. Residues 1498–1520 are disordered; it reads GQGELESDNEKKRNPESALSNQE.

Belongs to the TIC214 family. Part of the Tic complex.

Its subcellular location is the plastid. The protein resides in the chloroplast inner membrane. In terms of biological role, involved in protein precursor import into chloroplasts. May be part of an intermediate translocation complex acting as a protein-conducting channel at the inner envelope. The polypeptide is Protein TIC 214 (Arabis hirsuta (Hairy rock-cress)).